The primary structure comprises 67 residues: Conotoxin ArMLCL-012 (67 aa).

An N-terminal signal peptide occupies residues 1–19 (MLCLPVFIILLLLASPAAS). Positions 20 to 45 (NPLEKRIQSDLIRAALEDADTKNDPR) are excised as a propeptide. C64 carries the cysteine amide modification.

Belongs to the conotoxin T superfamily. Post-translationally, contains 2 disulfide bonds that can be either 'C1-C3, C2-C4' or 'C1-C4, C2-C3', since these disulfide connectivities have been observed for conotoxins with cysteine framework V (for examples, see AC P0DQQ7 and AC P81755). In terms of tissue distribution, expressed by the venom duct.

The protein resides in the secreted. This Conus arenatus (Sand-dusted cone) protein is Conotoxin ArMLCL-012.